Reading from the N-terminus, the 810-residue chain is Transmembrane GTPase Marf (810 aa).

The Cytoplasmic portion of the chain corresponds to 1 to 637 (MAAYLNRTIS…TTTPVEATPV (637 aa)). Phosphothreonine is present on Thr8. Positions 13 to 40 (TGQTGPADDDRHASSTDTVDKSGPGSPL) are disordered. The span at 20 to 32 (DDDRHASSTDTVD) shows a compositional bias: basic and acidic residues. Phosphoserine is present on Ser38. The 249-residue stretch at 134–382 (QRDHMKVAFF…IRYFEFQDFE (249 aa)) folds into the Dynamin-type G domain. The interval 144 to 151 (GRTSNGKS) is G1 motif. 147 to 152 (SNGKSS) serves as a coordination point for GTP. Positions 170 to 171 (TT) are G2 motif. A G3 motif region spans residues 239–242 (DSPG). 298-301 (NRWD) lines the GTP pocket. The interval 298–301 (NRWD) is G4 motif. A region of interest (G5 motif) is located at residue Lys327. Ser345 serves as a coordination point for GTP. Residues 427-476 (RNLKQDQKNLLTERIQGTETQMMQVTREMKMKIHNMVEEVEEKVSKALNE) adopt a coiled-coil conformation. Residue Thr553 is modified to Phosphothreonine. Ser554 carries the phosphoserine modification. Thr555 carries the phosphothreonine modification. The interval 609–630 (GQPALVNRQSSIGHSVSTPTTT) is disordered. The chain crosses the membrane as a helical span at residues 638 to 648 (CLLPAPVVAGI). The Mitochondrial intermembrane portion of the chain corresponds to 649 to 668 (TPEQLSLISRFAVSSIGSQG). The helical transmembrane segment at 669-689 (TVGGLVVAGVMLKTIGWRVLV) threads the bilayer. Topologically, residues 690 to 810 (GVGALYGCIY…IFEHNYISPQ (121 aa)) are cytoplasmic. Positions 759–806 (TATTDMNDELKTLDSQLNILEANQKQLKLLRNKANYIQNELDIFEHNY) form a coiled coil.

The protein belongs to the TRAFAC class dynamin-like GTPase superfamily. Dynamin/Fzo/YdjA family. Mitofusin subfamily. Interacts with Mul1. Ubiquitinated by park and Mul1. Ubiquitinated, probably by HUWE1, when dietary stearate (C18:0) levels are low; ubiquitination inhibits mitochondrial fusion. In terms of tissue distribution, widely expressed in embryos, accumulating in the mesoderm and endoderm during gut development. In the male germ line, it is expressed in spermatogonia, spermatocytes and early spermatids.

The protein resides in the mitochondrion outer membrane. It catalyses the reaction GTP + H2O = GDP + phosphate + H(+). Mitochondrial outer membrane GTPase that mediates mitochondrial clustering and fusion. Mitochondrial fusion is the physical merging of mitochondria that gives rise to mitochondrial networks, and this process is counterbalanced by mitochondrial fission which fragments networks. Promotes, but is not required for park recruitment to dysfunctional mitochondria. The polypeptide is Transmembrane GTPase Marf (Marf) (Drosophila melanogaster (Fruit fly)).